A 393-amino-acid chain; its full sequence is E3 ubiquitin-protein transferase RMND5B (393 aa).

Methionine 1 carries the post-translational modification N-acetylmethionine. Positions 116-148 constitute a LisH domain; it reads QQQILQMAIVEHLYQQGMLSVAEELCQESTLNV. Residues 155–212 enclose the CTLH domain; the sequence is PFLELNRILEALHEQDLGPALEWAVSHRQRLLELNSSLEFKLHRLHFIRLLAGGPEKQ. The RING-Gid-type zinc-finger motif lies at 338–379; sequence CPILRQQTSDSNPPIKLICGHVISRDALNKLINGGKLKCPYC.

Identified in the CTLH complex that contains GID4, RANBP9 and/or RANBP10, MKLN1, MAEA, RMND5A (or alternatively its paralog RMND5B), GID8, ARMC8, WDR26 and YPEL5. Within this complex, MAEA, RMND5A (or alternatively its paralog RMND5B), GID8, WDR26, and RANBP9 and/or RANBP10 form the catalytic core, while GID4, MKLN1, ARMC8 and YPEL5 have ancillary roles.

It localises to the cytoplasm. The protein resides in the cytosol. The enzyme catalyses S-ubiquitinyl-[E2 ubiquitin-conjugating enzyme]-L-cysteine + [acceptor protein]-L-lysine = [E2 ubiquitin-conjugating enzyme]-L-cysteine + N(6)-ubiquitinyl-[acceptor protein]-L-lysine.. In terms of biological role, core component of the CTLH E3 ubiquitin-protein ligase complex that selectively accepts ubiquitin from UBE2H and mediates ubiquitination and subsequent proteasomal degradation of the transcription factor HBP1. MAEA and RMND5A are both required for catalytic activity of the CTLH E3 ubiquitin-protein ligase complex. Catalytic activity of the complex is required for normal cell proliferation. The CTLH E3 ubiquitin-protein ligase complex is not required for the degradation of enzymes involved in gluconeogenesis, such as FBP1. The sequence is that of E3 ubiquitin-protein transferase RMND5B (Rmnd5b) from Mus musculus (Mouse).